A 244-amino-acid polypeptide reads, in one-letter code: 7-cyano-7-deazaguanine synthase (244 aa).

14-24 (FSGGQDSATCV) provides a ligand contact to ATP. Zn(2+)-binding residues include Cys202, Cys217, Cys220, and Cys223.

Belongs to the QueC family. Requires Zn(2+) as cofactor.

The enzyme catalyses 7-carboxy-7-deazaguanine + NH4(+) + ATP = 7-cyano-7-deazaguanine + ADP + phosphate + H2O + H(+). It functions in the pathway purine metabolism; 7-cyano-7-deazaguanine biosynthesis. Functionally, catalyzes the ATP-dependent conversion of 7-carboxy-7-deazaguanine (CDG) to 7-cyano-7-deazaguanine (preQ(0)). The protein is 7-cyano-7-deazaguanine synthase of Burkholderia mallei (strain NCTC 10229).